The sequence spans 470 residues: 3-isopropylmalate dehydratase large subunit (470 aa).

The [4Fe-4S] cluster site is built by cysteine 346, cysteine 406, and cysteine 409.

This sequence belongs to the aconitase/IPM isomerase family. LeuC type 1 subfamily. Heterodimer of LeuC and LeuD. The cofactor is [4Fe-4S] cluster.

It carries out the reaction (2R,3S)-3-isopropylmalate = (2S)-2-isopropylmalate. It participates in amino-acid biosynthesis; L-leucine biosynthesis; L-leucine from 3-methyl-2-oxobutanoate: step 2/4. Its function is as follows. Catalyzes the isomerization between 2-isopropylmalate and 3-isopropylmalate, via the formation of 2-isopropylmaleate. This Shouchella clausii (strain KSM-K16) (Alkalihalobacillus clausii) protein is 3-isopropylmalate dehydratase large subunit.